Consider the following 149-residue polypeptide: Probable glycine cleavage system H protein 2 (149 aa).

The Lipoyl-binding domain maps to 32–114 (IAVVGITDLA…YGQGWIAKIK (83 aa)). Residue Lys-73 is modified to N6-lipoyllysine.

This sequence belongs to the GcvH family. As to quaternary structure, the glycine cleavage system is composed of four proteins: P, T, L and H. (R)-lipoate is required as a cofactor.

Functionally, the glycine cleavage system catalyzes the degradation of glycine. The H protein shuttles the methylamine group of glycine from the P protein to the T protein. This Sulfolobus acidocaldarius (strain ATCC 33909 / DSM 639 / JCM 8929 / NBRC 15157 / NCIMB 11770) protein is Probable glycine cleavage system H protein 2.